The chain runs to 668 residues: MTSRMPTSGHRTSSSSSERGNMSVQQGKKPVVPGMSSGEDSSRPSTSYPQVPPAPLRPGWTLSRDSSVVRGINGDFHPGAQTPMSGMTHASWLTNNGNESNLSFTSSIMQEEAKLRWDSDEELKKMSKSMLRLQKWSLIIGLAGINGALIYIGWKYYQVYYFFLVLLSSNTVLQSFMCICIILHWFCTRVLCFWWRPKENIPAEPEKMVLLLPCYNETYEELTRSLDSLIAQKHIDNHPRVIFIVVDGNVRGPGMEKTTQEYLLQDILEPGPSRTFENGYRARDGLFMPVKTQTGFYKGIPYVFVGKRYNQGKRDSLCFARSLLYHFKQRSENVVTMFNNDLFEYIGNNFINAGLDDVTYLCGMDADTVFDEDCIYEMIVEIRKNPKVVGVCGHVCVDFDGSNWGYWSLYQSVEYSQTQGLRRMFQSRITGKVNCLPGCCQLIRVDEATFGDAVLRERFGYCPKPNDIMTQHIMGNYSEDSIHASIIFSLFPGCQTAQALRAKAMTIVPQDWKVFLSQRKRWALGSISNEFVMIFRPGIILIERLQSLIAVITWAITPFIIAAFVELLMVFAKRGKEVMSDPVFLGLICVLFFRYLYSFCIGFWLPRNNLERLQYFAGYVMHLFTSPFMNIIILVYSLFHSDDFKWGKTREVIRGEKDTDDAGGRGTH.

Polar residues predominate over residues 1 to 26 (MTSRMPTSGHRTSSSSSERGNMSVQQ). The interval 1–62 (MTSRMPTSGH…PAPLRPGWTL (62 aa)) is disordered. N-linked (GlcNAc...) asparagine glycans are attached at residues asparagine 21, asparagine 98, and asparagine 101. Transmembrane regions (helical) follow at residues 136 to 156 (WSLIIGLAGINGALIYIGWKY) and 162 to 182 (FFLVLLSSNTVLQSFMCICII). N-linked (GlcNAc...) asparagine glycans are attached at residues asparagine 216 and asparagine 476. 4 helical membrane-spanning segments follow: residues 522 to 542 (WALGSISNEFVMIFRPGIILI), 548 to 568 (LIAVITWAITPFIIAAFVELL), 583 to 603 (VFLGLICVLFFRYLYSFCIGF), and 615 to 635 (YFAGYVMHLFTSPFMNIIILV).

It belongs to the chitin synthase family. Class VIII subfamily.

It localises to the cell membrane. The protein localises to the cell septum. The enzyme catalyses [(1-&gt;4)-N-acetyl-beta-D-glucosaminyl](n) + UDP-N-acetyl-alpha-D-glucosamine = [(1-&gt;4)-N-acetyl-beta-D-glucosaminyl](n+1) + UDP + H(+). Polymerizes chitin, a structural polymer of the cell wall and septum, by transferring the sugar moiety of UDP-GlcNAc to the non-reducing end of the growing chitin polymer. Participated in the development of cell wall and plays a critical role in fungal response to environmental stresses. Necessary for pathogenicity and deoxinivalenol (DON) production. This Gibberella zeae (strain ATCC MYA-4620 / CBS 123657 / FGSC 9075 / NRRL 31084 / PH-1) (Wheat head blight fungus) protein is Chitin synthase 8.